A 362-amino-acid chain; its full sequence is 3-dehydroquinate synthase (362 aa).

Residues 70 to 75, 104 to 108, 128 to 129, Lys-141, and Lys-150 each bind NAD(+); these read DGESYK, GVVGD, and TT. The Zn(2+) site is built by Glu-183, His-246, and His-263.

The protein belongs to the sugar phosphate cyclases superfamily. Dehydroquinate synthase family. It depends on Co(2+) as a cofactor. Requires Zn(2+) as cofactor. NAD(+) is required as a cofactor.

Its subcellular location is the cytoplasm. The enzyme catalyses 7-phospho-2-dehydro-3-deoxy-D-arabino-heptonate = 3-dehydroquinate + phosphate. The protein operates within metabolic intermediate biosynthesis; chorismate biosynthesis; chorismate from D-erythrose 4-phosphate and phosphoenolpyruvate: step 2/7. In terms of biological role, catalyzes the conversion of 3-deoxy-D-arabino-heptulosonate 7-phosphate (DAHP) to dehydroquinate (DHQ). This Saccharophagus degradans (strain 2-40 / ATCC 43961 / DSM 17024) protein is 3-dehydroquinate synthase.